The sequence spans 356 residues: Nuclear hormone receptor family member nhr-42 (356 aa).

The segment at residues 7–82 is a DNA-binding region (nuclear receptor); sequence SQTCLICGDS…VGMRESAVLS (76 aa). The NR C4-type zinc-finger motif lies at 10 to 30; sequence CLICGDSADSLHFGALSCRAC. An NR C4-type; atypical zinc finger spans residues 48 to 70; sequence CDRQCKVDTGMRKLCASCRYDKC. The NR LBD domain occupies 108–356; sequence TSDSVLENLQ…HSSIFGNMAE (249 aa).

Belongs to the nuclear hormone receptor family.

Its subcellular location is the nucleus. Orphan nuclear receptor. The protein is Nuclear hormone receptor family member nhr-42 (nhr-42) of Caenorhabditis elegans.